The primary structure comprises 456 residues: Kynurenine 3-monooxygenase (456 aa).

This sequence belongs to the aromatic-ring hydroxylase family. KMO subfamily. Requires FAD as cofactor.

It catalyses the reaction L-kynurenine + NADPH + O2 + H(+) = 3-hydroxy-L-kynurenine + NADP(+) + H2O. It functions in the pathway cofactor biosynthesis; NAD(+) biosynthesis; quinolinate from L-kynurenine: step 1/3. Functionally, catalyzes the hydroxylation of L-kynurenine (L-Kyn) to form 3-hydroxy-L-kynurenine (L-3OHKyn). Required for synthesis of quinolinic acid. The polypeptide is Kynurenine 3-monooxygenase (Xanthomonas campestris pv. campestris (strain 8004)).